Consider the following 260-residue polypeptide: Sperm microtubule inner protein 6 (260 aa).

This sequence belongs to the SPMIP6 family. In terms of assembly, microtubule inner protein component of sperm flagellar doublet microtubules. Interacts with alpha-tubulin. In terms of tissue distribution, testis-specific, expressed exclusively in germ cells (at protein level). As to expression, testis-specific. Expressed in both lung and testis.

The protein localises to the cytoplasm. The protein resides in the cytoskeleton. It localises to the nucleus. Its subcellular location is the mitochondrion. It is found in the flagellum axoneme. Functionally, may participate in intramanchette transport and midpiece formation of the sperm tail. May play a potential role in somatic cell proliferation. This Mus musculus (Mouse) protein is Sperm microtubule inner protein 6 (SPMIP6).